A 665-amino-acid polypeptide reads, in one-letter code: UvrABC system protein B (665 aa).

The region spanning 31–414 (DGVKGGEKAQ…EMEQTETVVQ (384 aa)) is the Helicase ATP-binding domain. 44-51 (GATGTGKT) provides a ligand contact to ATP. The short motif at 97-120 (YYDYYQPEAYVPSSDTYIEKDSSI) is the Beta-hairpin element. Positions 435–601 (QIDDLVGEIH…TIIKEIRDLI (167 aa)) constitute a Helicase C-terminal domain. The 36-residue stretch at 629–664 (ADLLMKLEREMKDAAKALDFETAATLRDTILELKAA) folds into the UVR domain.

Belongs to the UvrB family. As to quaternary structure, forms a heterotetramer with UvrA during the search for lesions. Interacts with UvrC in an incision complex.

The protein resides in the cytoplasm. In terms of biological role, the UvrABC repair system catalyzes the recognition and processing of DNA lesions. A damage recognition complex composed of 2 UvrA and 2 UvrB subunits scans DNA for abnormalities. Upon binding of the UvrA(2)B(2) complex to a putative damaged site, the DNA wraps around one UvrB monomer. DNA wrap is dependent on ATP binding by UvrB and probably causes local melting of the DNA helix, facilitating insertion of UvrB beta-hairpin between the DNA strands. Then UvrB probes one DNA strand for the presence of a lesion. If a lesion is found the UvrA subunits dissociate and the UvrB-DNA preincision complex is formed. This complex is subsequently bound by UvrC and the second UvrB is released. If no lesion is found, the DNA wraps around the other UvrB subunit that will check the other stand for damage. The protein is UvrABC system protein B of Enterococcus faecalis (strain ATCC 700802 / V583).